A 160-amino-acid chain; its full sequence is Deoxyuridine 5'-triphosphate nucleotidohydrolase (160 aa).

Residues 79–81 (RSG), asparagine 92, 96–98 (TVD), and lysine 106 each bind substrate.

This sequence belongs to the dUTPase family. Requires Mg(2+) as cofactor.

It carries out the reaction dUTP + H2O = dUMP + diphosphate + H(+). It functions in the pathway pyrimidine metabolism; dUMP biosynthesis; dUMP from dCTP (dUTP route): step 2/2. This enzyme is involved in nucleotide metabolism: it produces dUMP, the immediate precursor of thymidine nucleotides and it decreases the intracellular concentration of dUTP so that uracil cannot be incorporated into DNA. In Rhizobium meliloti (strain 1021) (Ensifer meliloti), this protein is Deoxyuridine 5'-triphosphate nucleotidohydrolase.